A 66-amino-acid polypeptide reads, in one-letter code: Large ribosomal subunit protein bL33c (66 aa).

This sequence belongs to the bacterial ribosomal protein bL33 family.

It is found in the plastid. The protein resides in the chloroplast. In Helianthus annuus (Common sunflower), this protein is Large ribosomal subunit protein bL33c.